The sequence spans 542 residues: Phosphoacetylglucosamine mutase (542 aa).

An N-acetylmethionine modification is found at M1. T62 bears the Phosphothreonine mark. Residue S64 is the Phosphoserine intermediate of the active site. The Mg(2+) site is built by S64, D276, D278, and D280. A Phosphoserine modification is found at S64. Substrate contacts are provided by residues E370–N372, R496–T500, and R505.

This sequence belongs to the phosphohexose mutase family. Requires Mg(2+) as cofactor. In terms of tissue distribution, found in many tissues except lung. Relatively high expression in pancreas, heart, liver, and placenta, and relatively low expression in brain, skeletal muscle and kidney.

The enzyme catalyses N-acetyl-alpha-D-glucosamine 1-phosphate = N-acetyl-D-glucosamine 6-phosphate. It participates in nucleotide-sugar biosynthesis; UDP-N-acetyl-alpha-D-glucosamine biosynthesis; N-acetyl-alpha-D-glucosamine 1-phosphate from alpha-D-glucosamine 6-phosphate (route I): step 2/2. Its function is as follows. Catalyzes the conversion of GlcNAc-6-P into GlcNAc-1-P during the synthesis of uridine diphosphate/UDP-GlcNAc, a sugar nucleotide critical to multiple glycosylation pathways including protein N- and O-glycosylation. The polypeptide is Phosphoacetylglucosamine mutase (Homo sapiens (Human)).